A 495-amino-acid polypeptide reads, in one-letter code: Glycerol kinase (495 aa).

Thr11 provides a ligand contact to ADP. ATP is bound by residues Thr11, Thr12, and Ser13. Residue Thr11 coordinates sn-glycerol 3-phosphate. Arg15 contacts ADP. 4 residues coordinate sn-glycerol 3-phosphate: Arg81, Glu82, Tyr133, and Asp242. Positions 81, 82, 133, 242, and 243 each coordinate glycerol. ADP is bound by residues Thr264 and Gly307. Residues Thr264, Gly307, Gln311, and Gly409 each contribute to the ATP site. Residues Gly409 and Asn413 each contribute to the ADP site.

The protein belongs to the FGGY kinase family.

It catalyses the reaction glycerol + ATP = sn-glycerol 3-phosphate + ADP + H(+). Its pathway is polyol metabolism; glycerol degradation via glycerol kinase pathway; sn-glycerol 3-phosphate from glycerol: step 1/1. Inhibited by fructose 1,6-bisphosphate (FBP). In terms of biological role, key enzyme in the regulation of glycerol uptake and metabolism. Catalyzes the phosphorylation of glycerol to yield sn-glycerol 3-phosphate. The protein is Glycerol kinase of Borrelia hermsii (strain HS1 / DAH).